The chain runs to 122 residues: Large ribosomal subunit protein bL12 (122 aa).

The interval 96–122 is disordered; that stretch reads APKSLKTGLSKDEANEMKKKLEDAGAT. Residues 104-122 are compositionally biased toward basic and acidic residues; that stretch reads LSKDEANEMKKKLEDAGAT.

It belongs to the bacterial ribosomal protein bL12 family. Homodimer. Part of the ribosomal stalk of the 50S ribosomal subunit. Forms a multimeric L10(L12)X complex, where L10 forms an elongated spine to which 2 to 4 L12 dimers bind in a sequential fashion. Binds GTP-bound translation factors.

Its function is as follows. Forms part of the ribosomal stalk which helps the ribosome interact with GTP-bound translation factors. Is thus essential for accurate translation. In Liberibacter asiaticus (Citrus greening disease), this protein is Large ribosomal subunit protein bL12.